Here is a 2089-residue protein sequence, read N- to C-terminus: Rho GTPase-activating protein 32 (2089 aa).

Residues Thr-24–Phe-52 form a disordered region. Residues Gly-131 to Gly-245 form the PX; atypical domain. The 63-residue stretch at Pro-259 to Gln-321 folds into the SH3 domain. Residues Cys-372 to Phe-567 form the Rho-GAP domain. Ser-706, Ser-709, Ser-732, and Ser-738 each carry phosphoserine. A compositionally biased stretch (basic and acidic residues) spans Lys-828–Glu-837. A disordered region spans residues Lys-828–Val-858. Residues Gly-840–Pro-854 show a composition bias toward polar residues. A phosphoserine mark is found at Ser-852, Ser-856, Ser-892, and Ser-952. 3 disordered regions span residues Gln-955–Pro-1037, Cys-1119–Gly-1141, and Leu-1154–Thr-1197. 2 stretches are compositionally biased toward polar residues: residues Leu-998–Ala-1014 and Pro-1132–Gly-1141. A compositionally biased stretch (basic and acidic residues) spans Asp-1175–Gly-1191. Ser-1206 bears the Phosphoserine mark. The segment at Gly-1221–Asp-1368 is disordered. Positions Asp-1225–Asp-1235 are enriched in basic and acidic residues. A compositionally biased stretch (low complexity) spans Thr-1262–Ala-1275. The segment at Arg-1395–Pro-1714 is interaction with GAB2. 2 positions are modified to asymmetric dimethylarginine: Arg-1526 and Arg-1536. A Phosphoserine modification is found at Ser-1588. An interaction with FYN region spans residues Ser-1688–Glu-2089. Disordered stretches follow at residues Pro-1801–Leu-1865 and Arg-1881–Asp-2002. Positions Gly-1826 to Arg-1841 are enriched in basic and acidic residues. Polar residues predominate over residues Ser-1850–Leu-1865. Positions Arg-1881 to Cys-1892 are enriched in basic and acidic residues. Over residues Ser-1918–Leu-1939 the composition is skewed to polar residues. Composition is skewed to basic and acidic residues over residues Asn-1940 to Arg-1954 and Pro-1961 to Phe-1975. Arg-2039 is subject to Omega-N-methylarginine.

The protein belongs to the PX domain-containing GAP family. In terms of assembly, interacts with NTRK1 (via cytoplasmic domain); the interaction is independent of the phosphorylation state of NTRK1. Interacts with SHC3 (via SH2 domain). Interacts with RASA1 (via SH3 domain); the interaction is necessary for the Ras activation and cell transforming activities of ARHGAP32. Interacts with GAB1 and GAB2. Interacts with CRK and CRKL. Found in a complex with CRKL and BCAR1; upon EGF stimulation BCAR1 may be replaced by EGFR. Interacts with NCK1 (via SH3 domain); NCK1 recruits phosphorylated BCAR1 to the complex. Isoform 2 interacts with FYN; the interaction appears to be dependent on tyrosine phosphorylation of ARHGAP32. Interacts with EGFR; the interaction requires EGF stimulation and is increased by SHC3. Interacts with CDC42; the interaction requires constitutively active CDC42. Interacts with CTNNB1, DLG4, CDH2 and GRIN2B. Interacts with GPHN. Isoform 2 is phosphorylated on multiple tyrosine residues by FYN. Phosphorylated tyrosine residues undergo dephosphorylation after stimulation of NMDA receptors. Phosphorylated in vitro by CaMK2 in the presence of calmodulin and calcium; which inhibits GAP activity. In terms of tissue distribution, isoform 1 and isoform 2 are highly expressed in brain, specially in cortex, corpus striatum, hippocampus and thalamus. Low levels in cerebellum, colon, small intestine, and kidney.

It localises to the postsynaptic density. Its subcellular location is the cell projection. It is found in the dendritic spine. The protein localises to the cytoplasm. The protein resides in the cell cortex. It localises to the endosome membrane. Its subcellular location is the golgi apparatus membrane. It is found in the endoplasmic reticulum membrane. The protein localises to the membrane. In terms of biological role, GTPase-activating protein (GAP) promoting GTP hydrolysis on RHOA, CDC42 and RAC1 small GTPases. May be involved in the differentiation of neuronal cells during the formation of neurite extensions. Involved in NMDA receptor activity-dependent actin reorganization in dendritic spines. May mediate cross-talks between Ras- and Rho-regulated signaling pathways in cell growth regulation. Isoform 2 has higher GAP activity. This Mus musculus (Mouse) protein is Rho GTPase-activating protein 32 (Arhgap32).